The sequence spans 354 residues: Serum paraoxonase/arylesterase 2 (354 aa).

N-linked (GlcNAc...) asparagine glycosylation occurs at asparagine 29. The cysteines at positions 42 and 352 are disulfide-linked. Residues glutamate 53 and aspartate 54 each contribute to the Ca(2+) site. Histidine 114 (proton acceptor) is an active-site residue. Residues isoleucine 116, asparagine 167, aspartate 168, and asparagine 223 each contribute to the Ca(2+) site. Asparagine 254 carries an N-linked (GlcNAc...) asparagine glycan. Residues aspartate 268 and asparagine 269 each coordinate Ca(2+). Residues asparagine 269 and asparagine 323 are each glycosylated (N-linked (GlcNAc...) asparagine).

It belongs to the paraoxonase family. It depends on Ca(2+) as a cofactor. Glycosylated. In terms of processing, the signal sequence is not cleaved.

Its subcellular location is the membrane. The catalysed reaction is a phenyl acetate + H2O = a phenol + acetate + H(+). It carries out the reaction An aryl dialkyl phosphate + H2O = dialkyl phosphate + an aryl alcohol.. Functionally, the absence of paraoxonase activity in turkey and chicken blood and in turkey liver indicates that PON2, if expressed, does not hydrolyze paraoxon. The polypeptide is Serum paraoxonase/arylesterase 2 (PON2) (Gallus gallus (Chicken)).